A 147-amino-acid chain; its full sequence is UPF0178 protein VS_2364 (147 aa).

The protein belongs to the UPF0178 family.

The sequence is that of UPF0178 protein VS_2364 from Vibrio atlanticus (strain LGP32) (Vibrio splendidus (strain Mel32)).